The following is a 244-amino-acid chain: Glucosamine-6-phosphate deaminase (244 aa).

Aspartate 67 functions as the Proton acceptor; for enolization step in the catalytic mechanism. Catalysis depends on asparagine 136, which acts as the For ring-opening step. Histidine 138 functions as the Proton acceptor; for ring-opening step in the catalytic mechanism. Glutamate 143 acts as the For ring-opening step in catalysis.

It belongs to the glucosamine/galactosamine-6-phosphate isomerase family. NagB subfamily.

It carries out the reaction alpha-D-glucosamine 6-phosphate + H2O = beta-D-fructose 6-phosphate + NH4(+). It participates in amino-sugar metabolism; N-acetylneuraminate degradation; D-fructose 6-phosphate from N-acetylneuraminate: step 5/5. Its function is as follows. Catalyzes the reversible isomerization-deamination of glucosamine 6-phosphate (GlcN6P) to form fructose 6-phosphate (Fru6P) and ammonium ion. The sequence is that of Glucosamine-6-phosphate deaminase from Clostridium botulinum (strain Loch Maree / Type A3).